Reading from the N-terminus, the 552-residue chain is Olefin beta-lactone synthetase (552 aa).

Residues 182 to 190 (TSGSTGVPK), 316 to 321 (TPYGAT), Asp425, and Arg440 contribute to the ATP site.

Belongs to the ATP-dependent AMP-binding enzyme family. Monomer.

The catalysed reaction is a (2R,3S)-2-alkyl-3-hydroxyalkanoate + ATP = a cis-3-alkyl-4-alkyloxetan-2-one + AMP + diphosphate. Functionally, involved in olefin biosynthesis. Catalyzes the conversion of beta-hydroxy acid substrates to beta-lactones in the presence of ATP. Can use all four stereoisomers of 2-hexyl-3-hydroxydecanoic acid. In Stenotrophomonas maltophilia (strain K279a), this protein is Olefin beta-lactone synthetase.